The chain runs to 31 residues: MESVAYILILTMALAVLFFAIAFREPPRIEK.

The chain crosses the membrane as a helical span at residues 3–23 (SVAYILILTMALAVLFFAIAF).

This sequence belongs to the PsbT family. In terms of assembly, PSII is composed of 1 copy each of membrane proteins PsbA, PsbB, PsbC, PsbD, PsbE, PsbF, PsbH, PsbI, PsbJ, PsbK, PsbL, PsbM, PsbT, PsbX, PsbY, PsbZ, Psb30/Ycf12, peripheral proteins PsbO, CyanoQ (PsbQ), PsbU, PsbV and a large number of cofactors. It forms dimeric complexes.

It is found in the cellular thylakoid membrane. Its function is as follows. Found at the monomer-monomer interface of the photosystem II (PS II) dimer, plays a role in assembly and dimerization of PSII. PSII is a light-driven water plastoquinone oxidoreductase, using light energy to abstract electrons from H(2)O, generating a proton gradient subsequently used for ATP formation. The polypeptide is Photosystem II reaction center protein T (Gloeothece citriformis (strain PCC 7424) (Cyanothece sp. (strain PCC 7424))).